Here is a 438-residue protein sequence, read N- to C-terminus: Histidine--tRNA ligase (438 aa).

This sequence belongs to the class-II aminoacyl-tRNA synthetase family. Homodimer.

The protein localises to the cytoplasm. The catalysed reaction is tRNA(His) + L-histidine + ATP = L-histidyl-tRNA(His) + AMP + diphosphate + H(+). The protein is Histidine--tRNA ligase of Aromatoleum aromaticum (strain DSM 19018 / LMG 30748 / EbN1) (Azoarcus sp. (strain EbN1)).